The sequence spans 153 residues: Large ribosomal subunit protein uL29 (153 aa).

A large ribosomal subunit protein uL29 region spans residues 1-83; the sequence is MNKELRAKTN…KEQTKQKEIQ (83 aa). The interval 84-153 is unknown; it reads ESVKKIKQLR…NVKAKTKKKG (70 aa). Residues 100–121 show a composition bias toward basic and acidic residues; the sequence is NKEKRLANAEKVKAAPKPEQKT. Positions 100-153 are disordered; the sequence is NKEKRLANAEKVKAAPKPEQKTKKVKKAPKKTETVKPTTNKNKKNVKAKTKKKG. Positions 140–153 are enriched in basic residues; that stretch reads KNKKNVKAKTKKKG.

This sequence belongs to the universal ribosomal protein uL29 family.

The sequence is that of Large ribosomal subunit protein uL29 from Mycoplasmoides gallisepticum (strain R(low / passage 15 / clone 2)) (Mycoplasma gallisepticum).